We begin with the raw amino-acid sequence, 118 residues long: Large ribosomal subunit protein bL20 (118 aa).

The protein belongs to the bacterial ribosomal protein bL20 family.

In terms of biological role, binds directly to 23S ribosomal RNA and is necessary for the in vitro assembly process of the 50S ribosomal subunit. It is not involved in the protein synthesizing functions of that subunit. This chain is Large ribosomal subunit protein bL20, found in Shewanella baltica (strain OS223).